We begin with the raw amino-acid sequence, 261 residues long: Cell division protein DivIB (261 aa).

At 1–27 (MEKGKVVVLEDRVPKLKERRRQKANRR) the chain is on the cytoplasmic side. A helical transmembrane segment spans residues 28-48 (LIAYLSFFFLFILCVLYFQSP). Residues 47-117 (SPLGAVGHVE…PNTIAIHVRE (71 aa)) are alpha. Topologically, residues 49 to 261 (LGAVGHVEVS…KEDGDETTSP (213 aa)) are extracellular. The POTRA domain occupies 50–118 (GAVGHVEVSG…NTIAIHVREW (69 aa)). The segment at 118-230 (WRRIAYVYDR…YPAIAAALDR (113 aa)) is beta. The interval 231-260 (NVKGVIHLEVGSYFVPYSPPKKEDGDETTS) is gamma.

Belongs to the FtsQ/DivIB family. DivIB subfamily.

The protein localises to the cell membrane. Its function is as follows. Cell division protein that may be involved in stabilizing or promoting the assembly of the division complex. This is Cell division protein DivIB from Geobacillus kaustophilus (strain HTA426).